The chain runs to 90 residues: Co-chaperonin GroES (90 aa).

It belongs to the GroES chaperonin family. Heptamer of 7 subunits arranged in a ring. Interacts with the chaperonin GroEL.

The protein resides in the cytoplasm. In terms of biological role, together with the chaperonin GroEL, plays an essential role in assisting protein folding. The GroEL-GroES system forms a nano-cage that allows encapsulation of the non-native substrate proteins and provides a physical environment optimized to promote and accelerate protein folding. GroES binds to the apical surface of the GroEL ring, thereby capping the opening of the GroEL channel. In Bacteroides fragilis (strain ATCC 25285 / DSM 2151 / CCUG 4856 / JCM 11019 / LMG 10263 / NCTC 9343 / Onslow / VPI 2553 / EN-2), this protein is Co-chaperonin GroES.